A 139-amino-acid polypeptide reads, in one-letter code: MPTSKQIINKKQDEVSDIYGKEMIRVIRSLLKHKIIDTESLSKKTGYSINTVRRALYTLQKMGIVRYINKEDKTLWQLLETDYEKILDTLLEPYKKEEKAETGELLFICPKCGRKYTLDEAEMYEFRCPEDGTLLVANQ.

The region spanning 7–91 is the HTH TFE/IIEalpha-type domain; that stretch reads IINKKQDEVS…DYEKILDTLL (85 aa).

Belongs to the TFE family. As to quaternary structure, monomer. Interaction with RNA polymerase subunits RpoF and RpoE is necessary for Tfe stimulatory transcription activity. Able to interact with Tbp and RNA polymerase in the absence of DNA promoter. Interacts both with the preinitiation and elongation complexes.

Transcription factor that plays a role in the activation of archaeal genes transcribed by RNA polymerase. Facilitates transcription initiation by enhancing TATA-box recognition by TATA-box-binding protein (Tbp), and transcription factor B (Tfb) and RNA polymerase recruitment. Not absolutely required for transcription in vitro, but particularly important in cases where Tbp or Tfb function is not optimal. It dynamically alters the nucleic acid-binding properties of RNA polymerases by stabilizing the initiation complex and destabilizing elongation complexes. Seems to translocate with the RNA polymerase following initiation and acts by binding to the non template strand of the transcription bubble in elongation complexes. The chain is Transcription factor E from Nanoarchaeum equitans (strain Kin4-M).